The following is a 316-amino-acid chain: Ribosomal RNA small subunit methyltransferase H (316 aa).

S-adenosyl-L-methionine contacts are provided by residues 35–37, Asp-55, Phe-84, Asp-105, and Gln-112; that span reads AGH.

The protein belongs to the methyltransferase superfamily. RsmH family.

It is found in the cytoplasm. It catalyses the reaction cytidine(1402) in 16S rRNA + S-adenosyl-L-methionine = N(4)-methylcytidine(1402) in 16S rRNA + S-adenosyl-L-homocysteine + H(+). Functionally, specifically methylates the N4 position of cytidine in position 1402 (C1402) of 16S rRNA. The chain is Ribosomal RNA small subunit methyltransferase H from Streptococcus pneumoniae (strain Taiwan19F-14).